The chain runs to 354 residues: GTPase Obg (354 aa).

The region spanning 1–159 (MKYIDEAIIH…ADLKLELKVL (159 aa)) is the Obg domain. Residues 160 to 334 (ADVGLLGMPN…LTYAIMEFLE (175 aa)) enclose the OBG-type G domain. Residues 166–173 (GMPNAGKS), 191–195 (FTTMH), 213–216 (DIPG), 284–287 (NKVD), and 315–317 (SAM) each bind GTP. Positions 173 and 193 each coordinate Mg(2+).

This sequence belongs to the TRAFAC class OBG-HflX-like GTPase superfamily. OBG GTPase family. As to quaternary structure, monomer. It depends on Mg(2+) as a cofactor.

The protein localises to the cytoplasm. An essential GTPase which binds GTP, GDP and possibly (p)ppGpp with moderate affinity, with high nucleotide exchange rates and a fairly low GTP hydrolysis rate. Plays a role in control of the cell cycle, stress response, ribosome biogenesis and in those bacteria that undergo differentiation, in morphogenesis control. The chain is GTPase Obg from Nitrosospira multiformis (strain ATCC 25196 / NCIMB 11849 / C 71).